The following is a 156-amino-acid chain: ATP synthase subunit b (156 aa).

Residues 13–33 (AFIIFVWFCMKFVWPPLMNAI) traverse the membrane as a helical segment.

This sequence belongs to the ATPase B chain family. As to quaternary structure, F-type ATPases have 2 components, F(1) - the catalytic core - and F(0) - the membrane proton channel. F(1) has five subunits: alpha(3), beta(3), gamma(1), delta(1), epsilon(1). F(0) has three main subunits: a(1), b(2) and c(10-14). The alpha and beta chains form an alternating ring which encloses part of the gamma chain. F(1) is attached to F(0) by a central stalk formed by the gamma and epsilon chains, while a peripheral stalk is formed by the delta and b chains.

It is found in the cell inner membrane. Functionally, f(1)F(0) ATP synthase produces ATP from ADP in the presence of a proton or sodium gradient. F-type ATPases consist of two structural domains, F(1) containing the extramembraneous catalytic core and F(0) containing the membrane proton channel, linked together by a central stalk and a peripheral stalk. During catalysis, ATP synthesis in the catalytic domain of F(1) is coupled via a rotary mechanism of the central stalk subunits to proton translocation. In terms of biological role, component of the F(0) channel, it forms part of the peripheral stalk, linking F(1) to F(0). The protein is ATP synthase subunit b of Shewanella sediminis (strain HAW-EB3).